Reading from the N-terminus, the 507-residue chain is ATP synthase subunit alpha, chloroplastic (507 aa).

Position 170–177 (170–177) interacts with ATP; sequence GDRQTGKT.

Belongs to the ATPase alpha/beta chains family. F-type ATPases have 2 components, CF(1) - the catalytic core - and CF(0) - the membrane proton channel. CF(1) has five subunits: alpha(3), beta(3), gamma(1), delta(1), epsilon(1). CF(0) has four main subunits: a, b, b' and c.

The protein localises to the plastid. Its subcellular location is the chloroplast thylakoid membrane. It carries out the reaction ATP + H2O + 4 H(+)(in) = ADP + phosphate + 5 H(+)(out). Its function is as follows. Produces ATP from ADP in the presence of a proton gradient across the membrane. The alpha chain is a regulatory subunit. In Pelargonium hortorum (Common geranium), this protein is ATP synthase subunit alpha, chloroplastic.